The sequence spans 272 residues: uncharacterized protein (272 aa).

Lys185 serves as the catalytic Schiff-base intermediate with substrate.

This sequence belongs to the DeoC/FbaB aldolase family.

This is an uncharacterized protein from Saccharolobus solfataricus (strain ATCC 35092 / DSM 1617 / JCM 11322 / P2) (Sulfolobus solfataricus).